A 364-amino-acid chain; its full sequence is Aminomethyltransferase (364 aa).

The protein belongs to the GcvT family. In terms of assembly, the glycine cleavage system is composed of four proteins: P, T, L and H.

It catalyses the reaction N(6)-[(R)-S(8)-aminomethyldihydrolipoyl]-L-lysyl-[protein] + (6S)-5,6,7,8-tetrahydrofolate = N(6)-[(R)-dihydrolipoyl]-L-lysyl-[protein] + (6R)-5,10-methylene-5,6,7,8-tetrahydrofolate + NH4(+). The glycine cleavage system catalyzes the degradation of glycine. The polypeptide is Aminomethyltransferase (Enterobacter sp. (strain 638)).